A 270-amino-acid polypeptide reads, in one-letter code: Large ribosomal subunit protein uL10 (270 aa).

The tract at residues 234 to 270 (VTELEAGKTRPKREGNRRQAMNGDEMDEDQSSDEDSD) is disordered. The span at 238–250 (EAGKTRPKREGNR) shows a compositional bias: basic and acidic residues. The segment covering 257–270 (DEMDEDQSSDEDSD) has biased composition (acidic residues).

It belongs to the universal ribosomal protein uL10 family. Associates with the pre-60S ribosomal particle.

It is found in the nucleus. It localises to the nucleolus. The protein resides in the cytoplasm. Component of the ribosome assembly machinery. Nuclear paralog of the ribosomal protein P0, it binds pre-60S subunits at an early stage of assembly in the nucleolus, and is replaced by P0 in cytoplasmic pre-60S subunits and mature 80S ribosomes. This is Large ribosomal subunit protein uL10 from Chaetomium thermophilum (strain DSM 1495 / CBS 144.50 / IMI 039719) (Thermochaetoides thermophila).